A 432-amino-acid chain; its full sequence is Glutamate-1-semialdehyde 2,1-aminomutase (432 aa).

Residue lysine 265 is modified to N6-(pyridoxal phosphate)lysine.

Belongs to the class-III pyridoxal-phosphate-dependent aminotransferase family. HemL subfamily. In terms of assembly, homodimer. The cofactor is pyridoxal 5'-phosphate.

It localises to the cytoplasm. It catalyses the reaction (S)-4-amino-5-oxopentanoate = 5-aminolevulinate. Its pathway is porphyrin-containing compound metabolism; protoporphyrin-IX biosynthesis; 5-aminolevulinate from L-glutamyl-tRNA(Glu): step 2/2. The polypeptide is Glutamate-1-semialdehyde 2,1-aminomutase (Photobacterium profundum (strain SS9)).